The sequence spans 266 residues: Chymotrypsin-like elastase family member 1 (266 aa).

Positions Met-1 to Ser-16 are cleaved as a signal peptide. Residues Thr-17–Arg-26 constitute a propeptide, activation peptide. Residues Val-27–Ala-264 form the Peptidase S1 domain. A disulfide bridge connects residues Cys-56 and Cys-72. The active-site Charge relay system is His-71. Asp-85, Asn-87, Gln-90, and Glu-95 together coordinate Ca(2+). An N-linked (GlcNAc...) asparagine glycan is attached at Asn-87. The Charge relay system role is filled by Asp-119. 3 cysteine pairs are disulfide-bonded: Cys-153–Cys-220, Cys-184–Cys-200, and Cys-210–Cys-240. The Charge relay system role is filled by Ser-214. An N-linked (GlcNAc...) asparagine glycan is attached at Asn-241.

This sequence belongs to the peptidase S1 family. Elastase subfamily. It depends on Ca(2+) as a cofactor. In terms of tissue distribution, pancreas.

It localises to the secreted. It carries out the reaction Hydrolysis of proteins, including elastin. Preferential cleavage: Ala-|-Xaa.. Its function is as follows. Serine proteases that hydrolyze many proteins in addition to elastin. This chain is Chymotrypsin-like elastase family member 1 (CELA1), found in Bos taurus (Bovine).